The chain runs to 620 residues: E3 ubiquitin-protein ligase AMFR (620 aa).

7 helical membrane-spanning segments follow: residues 75–95 (LFVW…GKVI), 115–135 (FWNF…VQRV), 138–158 (VVLW…VQLC), 179–199 (VLAL…LCAL), 201–221 (GHIH…LVTV), 247–267 (SSYI…LDLM), and 269–289 (HIHM…VIFM). The RING-type; atypical zinc-finger motif lies at 334–372 (CAICWDSMTTARKLPCGHLFHNSCLRSWLEQDTSCPTCR). A CUE domain is found at 449–491 (QLNGMAHQIQEMFPQVPYHLILQDLQLTRSVEVTTDNILEGRI). A compositionally biased stretch (low complexity) spans 510-526 (ASEDGAGASSGSEVAAP). 2 disordered regions span residues 510 to 544 (ASED…SADE) and 569 to 598 (PEDG…DSVT). A compositionally biased stretch (basic and acidic residues) spans 531–544 (FEVRGSRFSKSADE). Acidic residues predominate over residues 581-595 (DNDDSVPSIEDEDSD).

Widely expressed.

The protein localises to the endoplasmic reticulum membrane. It catalyses the reaction [E2 ubiquitin-conjugating enzyme]-S-ubiquitinyl-L-cysteine + [acceptor protein]-L-cysteine = [E2 ubiquitin-conjugating enzyme]-L-cysteine + [acceptor protein]-S-ubiquitinyl-L-cysteine.. It participates in protein modification; protein ubiquitination. In terms of biological role, E3 ubiquitin-protein ligase that mediates the polyubiquitination of lysine and cysteine residues on target proteins. May participate in the final step of endoplasmic reticulum-associated degradation (ERAD). Required for proper lipid homeostasis. This chain is E3 ubiquitin-protein ligase AMFR, found in Danio rerio (Zebrafish).